Reading from the N-terminus, the 677-residue chain is DNA ligase (677 aa).

NAD(+)-binding positions include 32–36, 81–82, and Glu-112; these read DAQYD and SL. The active-site N6-AMP-lysine intermediate is Lys-114. Positions 135, 171, 288, and 312 each coordinate NAD(+). Zn(2+) contacts are provided by Cys-416, Cys-419, Cys-434, and Cys-439. Residues 598 to 677 enclose the BRCT domain; the sequence is NKNMPFSGME…REFINMLEQS (80 aa).

The protein belongs to the NAD-dependent DNA ligase family. LigA subfamily. Requires Mg(2+) as cofactor. The cofactor is Mn(2+).

The enzyme catalyses NAD(+) + (deoxyribonucleotide)n-3'-hydroxyl + 5'-phospho-(deoxyribonucleotide)m = (deoxyribonucleotide)n+m + AMP + beta-nicotinamide D-nucleotide.. In terms of biological role, DNA ligase that catalyzes the formation of phosphodiester linkages between 5'-phosphoryl and 3'-hydroxyl groups in double-stranded DNA using NAD as a coenzyme and as the energy source for the reaction. It is essential for DNA replication and repair of damaged DNA. This chain is DNA ligase, found in Dehalococcoides mccartyi (strain CBDB1).